The following is a 415-amino-acid chain: Maltose excess protein 1, chloroplastic (415 aa).

The tract at residues 74 to 93 (SESDSDSDFPHENQQGNPGL) is disordered. 9 helical membrane-spanning segments follow: residues 139–159 (ALSAVPWLGMLTGLLGNLSLL), 176–196 (LGVVSTHIVLAQLTMAEAMPI), 199–219 (FVATSAVVTIGLIVNCLYYFG), 231–251 (DVITIGGLSVLPQIMWSTFVP), 252–272 (LVPNSILPGTTAFGIAVAAII), 286–306 (FVGSLSGWTATLMFMWMPVSQ), 322–342 (SITMLLSMMGNGLMIPRALFI), 345–365 (LMWLTGSLWATLFYGYGNILC), and 373–393 (SQSFFVAATIGLISWIGLALW).

Expressed in leaves and roots. Expressed in root cap cells.

The protein resides in the plastid. It is found in the chloroplast inner membrane. In terms of biological role, probable maltose transporter. Essential for the conversion of starch to sucrose in leaves at night, probably via the export of maltose from the chloroplast. Required for root cap cells formation. The sequence is that of Maltose excess protein 1, chloroplastic (MEX1) from Arabidopsis thaliana (Mouse-ear cress).